The chain runs to 346 residues: [LysW]-lysine/[LysW]-ornithine hydrolase (346 aa).

His68 lines the Zn(2+) pocket. Residue Asp70 is part of the active site. Residue Asp92 participates in Zn(2+) binding. Glu122 (proton acceptor) is an active-site residue. Residues Glu123, Glu146, and His317 each coordinate Zn(2+).

The protein belongs to the peptidase M20A family. LysK subfamily. Zn(2+) is required as a cofactor. Requires Co(2+) as cofactor.

The protein localises to the cytoplasm. It catalyses the reaction [amino-group carrier protein]-C-terminal-gamma-(L-lysyl)-L-glutamate + H2O = [amino-group carrier protein]-C-terminal-L-glutamate + L-lysine. The catalysed reaction is [amino-group carrier protein]-C-terminal-gamma-(L-ornithyl)-L-glutamate + H2O = [amino-group carrier protein]-C-terminal-L-glutamate + L-ornithine. It functions in the pathway amino-acid biosynthesis; L-lysine biosynthesis via AAA pathway; L-lysine from L-alpha-aminoadipate (Thermus route): step 5/5. The protein operates within amino-acid biosynthesis; L-arginine biosynthesis. Its function is as follows. Catalyzes the release of L-lysine from [LysW]-gamma-L-lysine and the release of L-ornithine from [LysW]-L-ornithine. The polypeptide is [LysW]-lysine/[LysW]-ornithine hydrolase (Saccharolobus solfataricus (strain ATCC 35092 / DSM 1617 / JCM 11322 / P2) (Sulfolobus solfataricus)).